Consider the following 425-residue polypeptide: UPF0761 membrane protein xcc-b100_3490 (425 aa).

Helical transmembrane passes span 48-68, 105-125, 154-174, 182-202, 216-236, and 250-270; these read VFALVPLAIVVFGVLSAFPAF, FTVAGMVALVASLLITLHSIE, GTMLAAASMAMAAYVFALPLF, LAEFAWRLAPMAVEFVCIVLI, ALPGALLAVILMEIVKWGFGF, and ALSALPILLLWIYLSWVSVLL.

The protein belongs to the UPF0761 family.

It localises to the cell inner membrane. This is UPF0761 membrane protein xcc-b100_3490 from Xanthomonas campestris pv. campestris (strain B100).